The chain runs to 388 residues: Chorismate synthase (388 aa).

2 residues coordinate NADP(+): Arg-39 and Arg-45. Residues 132–134, 251–252, Gly-296, 311–315, and Arg-337 each bind FMN; these read RSS, NA, and KPIPT.

The protein belongs to the chorismate synthase family. Homotetramer. The cofactor is FMNH2.

It catalyses the reaction 5-O-(1-carboxyvinyl)-3-phosphoshikimate = chorismate + phosphate. It participates in metabolic intermediate biosynthesis; chorismate biosynthesis; chorismate from D-erythrose 4-phosphate and phosphoenolpyruvate: step 7/7. Its function is as follows. Catalyzes the anti-1,4-elimination of the C-3 phosphate and the C-6 proR hydrogen from 5-enolpyruvylshikimate-3-phosphate (EPSP) to yield chorismate, which is the branch point compound that serves as the starting substrate for the three terminal pathways of aromatic amino acid biosynthesis. This reaction introduces a second double bond into the aromatic ring system. The polypeptide is Chorismate synthase (Staphylococcus haemolyticus (strain JCSC1435)).